Reading from the N-terminus, the 228-residue chain is Phosphatidylglycerophosphate phosphatase PTPMT2 (228 aa).

Residues 1–10 (MTDETEEDDT) show a composition bias toward acidic residues. A disordered region spans residues 1-30 (MTDETEEDDTTQQRSSRNDGVSKNKGKGFK). The substrate site is built by Tyr-48 and Asp-126. The region spanning 66–213 (WWDQIDEYLL…VEEFSRLQSP (148 aa)) is the Tyrosine-protein phosphatase domain. Catalysis depends on Cys-157, which acts as the Phosphocysteine intermediate. The Glucan phosphatase signature motif CXAGXGR motif lies at 157–163 (CKAGRGR). 158-163 (KAGRGR) provides a ligand contact to substrate.

It belongs to the protein-tyrosine phosphatase family. Non-receptor class dual specificity subfamily. As to expression, expressed in roots, leaves, stems and flowers. Expressed at low levels in stems and flowers.

It carries out the reaction O-phospho-L-seryl-[protein] + H2O = L-seryl-[protein] + phosphate. The catalysed reaction is O-phospho-L-threonyl-[protein] + H2O = L-threonyl-[protein] + phosphate. The enzyme catalyses O-phospho-L-tyrosyl-[protein] + H2O = L-tyrosyl-[protein] + phosphate. It catalyses the reaction a 1,2-diacyl-sn-glycero-3-phospho-(1'-sn-glycero-3'-phosphate) + H2O = a 1,2-diacyl-sn-glycero-3-phospho-(1'-sn-glycerol) + phosphate. It participates in phospholipid metabolism; phosphatidylglycerol biosynthesis; phosphatidylglycerol from CDP-diacylglycerol: step 2/2. Its function is as follows. Exhibits phosphatidylglycerophosphate phosphatase activity. Involved in root growth and columella cells organization. May possess protein phosphatase activity. The protein is Phosphatidylglycerophosphate phosphatase PTPMT2 of Arabidopsis thaliana (Mouse-ear cress).